The primary structure comprises 242 residues: Uroporphyrinogen-III C-methyltransferase (242 aa).

S-adenosyl-L-homocysteine is bound by residues P12, 88–90 (GGD), 118–119 (TS), and M170.

The protein belongs to the precorrin methyltransferase family. In terms of assembly, homodimer.

The catalysed reaction is uroporphyrinogen III + 2 S-adenosyl-L-methionine = precorrin-2 + 2 S-adenosyl-L-homocysteine + H(+). Its pathway is cofactor biosynthesis; adenosylcobalamin biosynthesis; precorrin-2 from uroporphyrinogen III: step 1/1. Its function is as follows. Catalyzes the two successive C-2 and C-7 methylation reactions involved in the conversion of uroporphyrinogen III to precorrin-2 via the intermediate formation of precorrin-1. It is a step in the biosynthesis of both cobalamin (vitamin B12) and coenzyme F430. This chain is Uroporphyrinogen-III C-methyltransferase (cobA), found in Methanocaldococcus jannaschii (strain ATCC 43067 / DSM 2661 / JAL-1 / JCM 10045 / NBRC 100440) (Methanococcus jannaschii).